Here is a 97-residue protein sequence, read N- to C-terminus: Large ribosomal subunit protein uL23 (97 aa).

It belongs to the universal ribosomal protein uL23 family. Part of the 50S ribosomal subunit. Contacts protein L29, and trigger factor when it is bound to the ribosome.

Functionally, one of the early assembly proteins it binds 23S rRNA. One of the proteins that surrounds the polypeptide exit tunnel on the outside of the ribosome. Forms the main docking site for trigger factor binding to the ribosome. The chain is Large ribosomal subunit protein uL23 from Brucella anthropi (strain ATCC 49188 / DSM 6882 / CCUG 24695 / JCM 21032 / LMG 3331 / NBRC 15819 / NCTC 12168 / Alc 37) (Ochrobactrum anthropi).